We begin with the raw amino-acid sequence, 242 residues long: Haloacid dehalogenase-like hydrolase domain-containing protein 3 (242 aa).

Belongs to the HAD-like hydrolase superfamily.

The polypeptide is Haloacid dehalogenase-like hydrolase domain-containing protein 3 (hdhd3) (Danio rerio (Zebrafish)).